The chain runs to 519 residues: cAMP-dependent protein kinase catalytic subunit (519 aa).

Residues 1 to 195 form a disordered region; sequence MLPDTGILSP…SQTLQKAENA (195 aa). Composition is skewed to polar residues over residues 10 to 25, 116 to 159, and 173 to 191; these read PFTT…SQTL, VTPS…TSPI, and TPVN…TLQK. In terms of domain architecture, Protein kinase spans 208 to 463; that stretch reads FNFQRTLGTG…SRSVLEHPWF (256 aa). Residues 214-222 and Lys-237 contribute to the ATP site; that span reads LGTGSFGRV. The active-site Proton acceptor is the Asp-331. Residues 464 to 519 form the AGC-kinase C-terminal domain; sequence AEVNWERLLSKQIEPPYVPPVRGGIGDASLFDKYPEETEEYGKDGPDQYGHFFTDF.

This sequence belongs to the protein kinase superfamily. Ser/Thr protein kinase family.

The enzyme catalyses L-seryl-[protein] + ATP = O-phospho-L-seryl-[protein] + ADP + H(+). It carries out the reaction L-threonyl-[protein] + ATP = O-phospho-L-threonyl-[protein] + ADP + H(+). Activated by cAMP. Functionally, functions downstream of adenylate cyclase to regulate trap-development for nematode capture. This is cAMP-dependent protein kinase catalytic subunit from Arthrobotrys oligospora (strain ATCC 24927 / CBS 115.81 / DSM 1491) (Nematode-trapping fungus).